The chain runs to 304 residues: Acetylglutamate kinase (304 aa).

Residues 64-65 (GG), Arg-86, and Asn-181 contribute to the substrate site.

Belongs to the acetylglutamate kinase family. ArgB subfamily.

Its subcellular location is the plastid. It is found in the chloroplast. It carries out the reaction N-acetyl-L-glutamate + ATP = N-acetyl-L-glutamyl 5-phosphate + ADP. The protein operates within amino-acid biosynthesis; L-arginine biosynthesis; N(2)-acetyl-L-ornithine from L-glutamate: step 2/4. Functionally, catalyzes the ATP-dependent phosphorylation of N-acetyl-L-glutamate. This Cyanidium caldarium (Red alga) protein is Acetylglutamate kinase.